The chain runs to 372 residues: Cell division protein FtsZ 1 (372 aa).

GTP is bound by residues 51–55 (GAGCN), 138–140 (GTG), glutamate 169, arginine 173, and aspartate 216. Positions 351 to 372 (QEETPEPSEEEVPPVKIDIPEL) are disordered. Residues 353–362 (ETPEPSEEEV) show a composition bias toward acidic residues.

The protein belongs to the FtsZ family. As to quaternary structure, homodimer. Polymerizes to form a dynamic ring structure in a strictly GTP-dependent manner. Interacts directly with several other division proteins.

The protein localises to the cytoplasm. Essential cell division protein that forms a contractile ring structure (Z ring) at the future cell division site. The regulation of the ring assembly controls the timing and the location of cell division. One of the functions of the FtsZ ring is to recruit other cell division proteins to the septum to produce a new cell wall between the dividing cells. Binds GTP and shows GTPase activity. The chain is Cell division protein FtsZ 1 from Pyrococcus abyssi (strain GE5 / Orsay).